The primary structure comprises 121 residues: Peptidyl-tRNA hydrolase (121 aa).

This sequence belongs to the PTH2 family.

It localises to the cytoplasm. It catalyses the reaction an N-acyl-L-alpha-aminoacyl-tRNA + H2O = an N-acyl-L-amino acid + a tRNA + H(+). Functionally, the natural substrate for this enzyme may be peptidyl-tRNAs which drop off the ribosome during protein synthesis. The chain is Peptidyl-tRNA hydrolase from Sulfurisphaera tokodaii (strain DSM 16993 / JCM 10545 / NBRC 100140 / 7) (Sulfolobus tokodaii).